The primary structure comprises 398 residues: Protein FAM53A (398 aa).

The disordered stretch occupies residues 85 to 253 (QWQPQSPRPG…TSTPALGGRR (169 aa)). A compositionally biased stretch (polar residues) spans 103 to 115 (VDPSESTGSSTAP). A compositionally biased stretch (basic and acidic residues) spans 123-132 (SLSEPEELVR). A Phosphoserine modification is found at Ser-125. Composition is skewed to low complexity over residues 176-193 (STGPTSPATPRPSSASGG) and 234-250 (TPLPWASSSPTSTPALG). Residues 268 to 276 (KRSRRKRRR) carry the Nuclear localization signal motif. Phosphoserine is present on residues Ser-301 and Ser-304. The interval 336 to 398 (PGCSQRGLRT…ELDLEQIENN (63 aa)) is disordered. Basic and acidic residues predominate over residues 363-375 (GSRRSSGDPRDGD).

This sequence belongs to the FAM53 family.

Its subcellular location is the nucleus. Its function is as follows. May play an important role in neural development; the dorsomedial roof of the third ventricle. This is Protein FAM53A from Homo sapiens (Human).